The sequence spans 141 residues: MAKKVVAVIKLALQAGKANPAPPVGPALGQHGVNIMAFCKEYNARTQDKAGYVIPVEISVFEDRSFTFITKTPPASVLITKAAGIQKGSGESAKGSVGSINRSQLEEIAKTKLPDLNCTSVESAMRVIEGTARNMGVAISD.

The protein belongs to the universal ribosomal protein uL11 family. As to quaternary structure, part of the ribosomal stalk of the 50S ribosomal subunit. Interacts with L10 and the large rRNA to form the base of the stalk. L10 forms an elongated spine to which L12 dimers bind in a sequential fashion forming a multimeric L10(L12)X complex. In terms of processing, one or more lysine residues are methylated.

In terms of biological role, forms part of the ribosomal stalk which helps the ribosome interact with GTP-bound translation factors. This is Large ribosomal subunit protein uL11 from Synechococcus sp. (strain CC9311).